A 295-amino-acid polypeptide reads, in one-letter code: Protoheme IX farnesyltransferase (295 aa).

9 consecutive transmembrane segments (helical) span residues 7 to 27 (VTKP…FLLA), 34 to 54 (VPLF…GCVF), 78 to 98 (LIAP…GIAL), 106 to 126 (LAAL…SLYM), 131 to 151 (VYGT…GYCA), 161 to 181 (LILL…IAIF), 207 to 227 (ITLY…GGYA), 228 to 248 (GYKY…MALS), and 263 to 283 (LFMF…VDFQ).

It belongs to the UbiA prenyltransferase family. Protoheme IX farnesyltransferase subfamily.

The protein resides in the cell inner membrane. It catalyses the reaction heme b + (2E,6E)-farnesyl diphosphate + H2O = Fe(II)-heme o + diphosphate. It functions in the pathway porphyrin-containing compound metabolism; heme O biosynthesis; heme O from protoheme: step 1/1. Converts heme B (protoheme IX) to heme O by substitution of the vinyl group on carbon 2 of heme B porphyrin ring with a hydroxyethyl farnesyl side group. The protein is Protoheme IX farnesyltransferase of Aeromonas salmonicida (strain A449).